A 309-amino-acid polypeptide reads, in one-letter code: Pantothenate synthetase (309 aa).

Threonine 2 is modified (N-acetylthreonine). 40 to 47 (MGALHEGH) lines the ATP pocket. Histidine 47 acts as the Proton donor in catalysis. Glutamine 72 provides a ligand contact to (R)-pantoate. Glutamine 72 is a beta-alanine binding site. Positions 88, 89, and 92 each coordinate Mg(2+). 158-161 (GEKD) contacts ATP. Position 164 (glutamine 164) interacts with (R)-pantoate. Residues valine 187 and 195-198 (MSSR) each bind ATP.

The protein belongs to the pantothenate synthetase family.

The protein localises to the cytoplasm. The enzyme catalyses (R)-pantoate + beta-alanine + ATP = (R)-pantothenate + AMP + diphosphate + H(+). It participates in cofactor biosynthesis; (R)-pantothenate biosynthesis; (R)-pantothenate from (R)-pantoate and beta-alanine: step 1/1. With respect to regulation, pantothenate exhibits uncompetitive inhibition toward both D-pantoate and ATP, and non-competitive inhibition toward beta-alanine. AMPCPP exhibits competitive inhibition toward ATP, uncompetitive inhibition toward beta-alanine, and non-competitive inhibition toward D-pantoate. The enzyme is most active in the presence of magnesium or manganese. Other divalent cations (cobalt, nickel, zinc) are less effective. Catalyzes the condensation of pantoate with beta-alanine in an ATP-dependent reaction via a pantoyl-adenylate intermediate. This Mycobacterium tuberculosis (strain ATCC 25618 / H37Rv) protein is Pantothenate synthetase (panC).